A 517-amino-acid chain; its full sequence is MDIIGGQHLRQMWDDLADVYGHKTALICESSGGVVNRYSYLELNQEINRTANLFYTLGIRKGDKVALHLDNCPEFIFCWFGLVKIGAIMVPINARLLREESAWILQNSQACLLVTSAQFYPMYQQIQQEDATQLRHICLTDVELPADDGVSSFTQLKNQQPVTLCYAPPLSTDDTAEILFTSGTTSRPKGVVITHYNLRFAGYYSAWQCALRDDDVYLTVMPAFHIDCQCTAAMAAFSAGATFVLVEKYSARAFWGQVQKYRATVTECIPMMIRTLMVQPPSVNDRQHHLREVMFYLNLSEQEKDAFCERFGVRLLTSYGMTETIVGIIGDRPGDKRRWPSIGRAGFCYEAEIRDDHNRPLPAGEIGEICIKGVPGKTIFKEYFLNPQATARVLEADGWLHTGDTGYRDEEGFFYFVDRRCNMIKRGGENVSCVELENIIAAHPKIQDIVVVGIKDSIRDEAIKAFVVLNEGEILSEEEFFNFCEQNMAKFKVPSYLEIRKDLPRNCSGKIIRKALK.

It belongs to the ATP-dependent AMP-binding enzyme family.

The catalysed reaction is 4-(trimethylamino)butanoate + ATP + CoA = 4-(trimethylamino)butanoyl-CoA + AMP + diphosphate. It carries out the reaction crotonobetaine + ATP + CoA = crotonobetainyl-CoA + AMP + diphosphate. The enzyme catalyses (R)-carnitine + ATP + CoA = (R)-carnitinyl-CoA + AMP + diphosphate. It functions in the pathway amine and polyamine metabolism; carnitine metabolism. Functionally, catalyzes the transfer of CoA to carnitine, generating the initial carnitinyl-CoA needed for the CaiB reaction cycle. Also has activity toward crotonobetaine and gamma-butyrobetaine. The protein is Crotonobetaine/carnitine--CoA ligase of Escherichia fergusonii (strain ATCC 35469 / DSM 13698 / CCUG 18766 / IAM 14443 / JCM 21226 / LMG 7866 / NBRC 102419 / NCTC 12128 / CDC 0568-73).